The chain runs to 622 residues: MPSAKKRDSPSVDRRDRLTLAKLASYDDIATDALVDRAYFWTNTRKNRTKYNPMRGIVDDDVARVLLHDVIVAKDLAKAERELLAMSGLKKFMARLPNNREKDWFRRHLRKYIQMYLPDSPFEITTTNRYTITEYEAAVCARKFIKQGQEIKYLSGTLVPMTREEERDLDLKRKDFSIVMSSRKKTPSFFLGPARFANHDCNANGKLVTRGSEGMQVVATRDIYIGEEITVSYGDDYFGIDNCECLCLTCERLVRNGWAPHVPSEPQSKASTPALNDDTLSTDSHVSSKKRKFAPDSDIETSAPSTPCKRGKFVRQSSKLKSEVSFLEVATSIEQPAGPSPVCNGSDMGALGNSTVESDNDKAVDPALPSPPADSPPSTAANESERSSTSTTATSVCDAAVKIKVEETIEQSAEKVSALSEANVELPTTSLRSGSTEGDTKLELSDQPSTLKQGSIGSNRKERRKSRGKPLVVESVEAERQLVRVPGDYTKTSKLLAQTYDRWVDCHTCNAWFVQHDSYLTRRECPRCERHSMLYGYRWPKTDKEGPSDDEERVMDHRTVHRFLYPEEEALISRKDRGVSFGVTPTPELSEPRTETEGSEGCEDRRTTRASRRRTRSLRMTM.

In terms of domain architecture, SET spans 120-234 (SPFEITTTNR…IGEEITVSYG (115 aa)). Disordered regions lie at residues 262–314 (VPSE…GKFV), 335–394 (QPAG…TTAT), 427–470 (PTTS…RGKP), and 576–622 (DRGV…RMTM). A compositionally biased stretch (polar residues) spans 265–285 (EPQSKASTPALNDDTLSTDSH). Low complexity predominate over residues 376–394 (PPSTAANESERSSTSTTAT). Polar residues-rich tracts occupy residues 427–437 (PTTSLRSGSTE) and 446–458 (DQPSTLKQGSIGS). Positions 590–607 (SEPRTETEGSEGCEDRRT) are enriched in basic and acidic residues. Residues 608–622 (TRASRRRTRSLRMTM) are compositionally biased toward basic residues.

It belongs to the class V-like SAM-binding methyltransferase superfamily. Histone-lysine methyltransferase family. Suvar4-20 subfamily.

It is found in the nucleus. Its subcellular location is the chromosome. The enzyme catalyses L-lysyl(20)-[histone H4] + 3 S-adenosyl-L-methionine = N(6),N(6),N(6)-trimethyl-L-lysyl(20)-[histone H4] + 3 S-adenosyl-L-homocysteine + 3 H(+). Histone methyltransferase that trimethylates 'Lys-20' of histone H4 to form H4K20me3. The protein is Histone-lysine N-methyltransferase set9 (set9) of Aspergillus fumigatus (strain ATCC MYA-4609 / CBS 101355 / FGSC A1100 / Af293) (Neosartorya fumigata).